Here is a 70-residue protein sequence, read N- to C-terminus: Conotoxin Im11.11 (70 aa).

A signal peptide spans Met1 to Ala25. Disulfide bonds link Cys26/Cys40, Cys33/Cys45, Cys39/Cys49, and Cys44/Cys53. At Pro56 the chain carries Proline amide. Positions Thr60–Arg70 are excised as a propeptide.

It belongs to the conotoxin I2 superfamily. Expressed by the venom duct.

The protein localises to the secreted. Its function is as follows. Probable neurotoxin. The polypeptide is Conotoxin Im11.11 (Conus imperialis (Imperial cone)).